Consider the following 199-residue polypeptide: Photosystem I reaction center subunit XI (199 aa).

2 helical membrane-spanning segments follow: residues 108–128 (VTAGLLSAIGAVHIMTALLVL) and 165–185 (FWLGGCGGAVFAWLLVGTLHL).

This sequence belongs to the PsaL family.

It localises to the cellular thylakoid membrane. The polypeptide is Photosystem I reaction center subunit XI (Prochlorococcus marinus (strain MIT 9215)).